Here is a 624-residue protein sequence, read N- to C-terminus: PTS system mannitol-specific EIICBA component (624 aa).

The PTS EIIC type-2 domain maps to 13–336 (FGRFLSNMVM…SFVIASFFLK (324 aa)). 6 consecutive transmembrane segments (helical) span residues 25–46 (IGAF…WLPN), 51–71 (KLVG…SGGK), 135–156 (SSGI…PAVK), 166–186 (VDIL…EPAK), 274–293 (VIAG…AGLV), and 314–335 (VGVL…SFFL). The 92-residue stretch at 372–463 (QKIFVACDAG…LVQDLSNTKV (92 aa)) folds into the PTS EIIB type-2 domain. The Phosphocysteine intermediate; for EIIB activity role is filled by cysteine 378. Position 378 is a phosphocysteine; by EIIA (cysteine 378). In terms of domain architecture, PTS EIIA type-2 spans 482-624 (FVLTEKQVFL…VEKVLALLKA (143 aa)). Histidine 542 functions as the Tele-phosphohistidine intermediate; for EIIA activity in the catalytic mechanism. Residue histidine 542 is modified to Phosphohistidine; by HPr.

In terms of assembly, homodimer. An intramolecular phosphotransfer takes places between His-542 and Cys-378.

Its subcellular location is the cell inner membrane. It catalyses the reaction D-mannitol(out) + N(pros)-phospho-L-histidyl-[protein] = D-mannitol 1-phosphate(in) + L-histidyl-[protein]. In terms of biological role, the phosphoenolpyruvate-dependent sugar phosphotransferase system (sugar PTS), a major carbohydrate active transport system, catalyzes the phosphorylation of incoming sugar substrates concomitantly with their translocation across the cell membrane. This system is involved in D-mannitol transport. This Pasteurella multocida (strain Pm70) protein is PTS system mannitol-specific EIICBA component (mtlA).